The primary structure comprises 432 residues: UDP-glucose 6-dehydrogenase (432 aa).

NAD(+) is bound by residues 2–19 (NITFIGSGYVGLVSGIIM), Val-11, Asp-30, Lys-35, Thr-121, and Glu-152. Substrate is bound by residues 148–152 (EFLRE), Lys-202, Asn-206, 247–251 (FLNAG), and Gly-255. Residue Cys-258 is the Nucleophile of the active site. Position 261 (Lys-261) interacts with NAD(+). Lys-319 contacts substrate. Arg-326 is a binding site for NAD(+).

It belongs to the UDP-glucose/GDP-mannose dehydrogenase family.

It catalyses the reaction UDP-alpha-D-glucose + 2 NAD(+) + H2O = UDP-alpha-D-glucuronate + 2 NADH + 3 H(+). The protein operates within nucleotide-sugar biosynthesis; UDP-alpha-D-glucuronate biosynthesis; UDP-alpha-D-glucuronate from UDP-alpha-D-glucose: step 1/1. This chain is UDP-glucose 6-dehydrogenase (udg), found in Rickettsia conorii (strain ATCC VR-613 / Malish 7).